The chain runs to 244 residues: NAD-dependent protein deacetylase (244 aa).

The Deacetylase sirtuin-type domain maps to 1–244 (MSATERQLQY…IGDTCRQLRA (244 aa)). 8 residues coordinate NAD(+): A27, T31, F38, R39, Q107, I109, D110, and H125. F38 is a nicotinamide binding site. I109 and D110 together coordinate nicotinamide. Catalysis depends on H125, which acts as the Proton acceptor. Zn(2+)-binding residues include C133, C136, C153, and C156. 4 residues coordinate NAD(+): S192, S193, N217, and I235.

The protein belongs to the sirtuin family. Class U subfamily. Zn(2+) is required as a cofactor.

The protein resides in the cytoplasm. The enzyme catalyses N(6)-acetyl-L-lysyl-[protein] + NAD(+) + H2O = 2''-O-acetyl-ADP-D-ribose + nicotinamide + L-lysyl-[protein]. In terms of biological role, NAD-dependent protein deacetylase which modulates the activities of several enzymes which are inactive in their acetylated form. This is NAD-dependent protein deacetylase from Chromobacterium violaceum (strain ATCC 12472 / DSM 30191 / JCM 1249 / CCUG 213 / NBRC 12614 / NCIMB 9131 / NCTC 9757 / MK).